Here is a 1174-residue protein sequence, read N- to C-terminus: Creatine kinase, flagellar (1174 aa).

Positions 1-14 (MGCAASSQQTTATG) are enriched in polar residues. Residues 1-62 (MGCAASSQQT…PFVEPDPNYP (62 aa)) form a disordered region. Positions 18 to 39 (AAGEKANPAPANNNPNAANKAE) are enriched in low complexity. Residues 53-139 (PFVEPDPNYP…FDPTIDKRHN (87 aa)) form the Phosphagen kinase N-terminal 1 domain. A 1; approximate repeat occupies 61-414 (YPDLSKHNNY…EKALEKGSDI (354 aa)). In terms of domain architecture, Phosphagen kinase C-terminal 1 spans 166 to 408 (YVLSCRVRTG…KKLIELEKAL (243 aa)). ATP is bound by residues 169 to 173 (SCRVR), His-232, Arg-277, and 333 to 337 (RAGVH). The region spanning 426 to 512 (RAEQVKEGYP…FDPVIDARHG (87 aa)) is the Phosphagen kinase N-terminal 2 domain. A 2; approximate repeat occupies 434–787 (YPDLSKHNNH…EKKLEKGEDI (354 aa)). The region spanning 539 to 781 (YVLSCRVRTG…ELLVQMEKKL (243 aa)) is the Phosphagen kinase C-terminal 2 domain. ATP-binding positions include 542-546 (SCRVR), His-605, Arg-706, 734-739 (RGTGGV), and Asp-749. Residues 800 to 886 (PIKPFSYDYP…FDPVISARHG (87 aa)) form the Phosphagen kinase N-terminal 3 domain. A 3; approximate repeat occupies 808–1161 (YPDFSLHNNW…EKALMKGEDI (354 aa)). One can recognise a Phosphagen kinase C-terminal 3 domain in the interval 913-1155 (FVLSCRVRTG…KLLVNLEKAL (243 aa)).

The protein belongs to the ATP:guanido phosphotransferase family. Monomer.

It localises to the cytoplasm. It is found in the cytoskeleton. Its subcellular location is the flagellum axoneme. The catalysed reaction is creatine + ATP = N-phosphocreatine + ADP + H(+). This axonemal protein participates in an energy shuttle that utilizes phosphocreatine to transfer the energy from ATP generated by the mitochondrion in the sperm head to dynein in the distal portions of the flagellum. The chain is Creatine kinase, flagellar from Strongylocentrotus purpuratus (Purple sea urchin).